The primary structure comprises 170 residues: MLAIGDVILRAFNFVFLVIALGLTGSLAATTITQHNPQINFAVFAAAFGLLTSSFYGVFAYFVAAFAWPVILFVFDFLNFVFTFAAATAIAAGIRAHSCSNQDYLDDNNIAQGSSGRCRKAQASTAFLYFSTFIFIASAIFSAISLSKGGLFGHSSRPAPRTGVPTMSQV.

At 1 to 11 (MLAIGDVILRA) the chain is on the cytoplasmic side. The MARVEL domain occupies 6 to 141 (DVILRAFNFV…TFIFIASAIF (136 aa)). Residues 12–32 (FNFVFLVIALGLTGSLAATTI) traverse the membrane as a helical segment. Residues 33 to 38 (TQHNPQ) are Extracellular-facing. Residues 39 to 61 (INFAVFAAAFGLLTSSFYGVFAY) traverse the membrane as a helical segment. The Cytoplasmic portion of the chain corresponds to 62–76 (FVAAFAWPVILFVFD). A helical transmembrane segment spans residues 77 to 97 (FLNFVFTFAAATAIAAGIRAH). The Extracellular segment spans residues 98–125 (SCSNQDYLDDNNIAQGSSGRCRKAQAST). A helical membrane pass occupies residues 126–146 (AFLYFSTFIFIASAIFSAISL). Topologically, residues 147–170 (SKGGLFGHSSRPAPRTGVPTMSQV) are cytoplasmic.

This sequence belongs to the NCE102 family.

Its subcellular location is the cell membrane. Functionally, involved in membrane organization. Involved in a novel pathway of export of proteins that lack a cleavable signal sequence. Non-classical export pathway also functions as an alternative clearance/detoxification pathway to eliminate damaged material, when the basic repair pathway is not sufficient. Regulates actin organization and subsequent morphogenesis and pathogenesis. This Candida albicans (strain SC5314 / ATCC MYA-2876) (Yeast) protein is Non-classical export protein 102.